Here is a 114-residue protein sequence, read N- to C-terminus: DNA-directed RNA polymerase subunit Rpo4 (114 aa).

The protein belongs to the eukaryotic RPB4 RNA polymerase subunit family. Part of the 13-subunit RNA polymerase complex. Forms a stalk with Rpo7 that extends from the main structure. In terms of processing, in purified enzyme appears as 5 forms, each differing by about 200 Da of a covalently bound, negatively charged residue. Not glycosylated.

The protein resides in the cytoplasm. The catalysed reaction is RNA(n) + a ribonucleoside 5'-triphosphate = RNA(n+1) + diphosphate. In terms of biological role, DNA-dependent RNA polymerase catalyzes the transcription of DNA into RNA using the four ribonucleoside triphosphates as substrates. This subunit is less well bound than the others. Probably not involved in transcription initiation. The protein is DNA-directed RNA polymerase subunit Rpo4 of Sulfolobus acidocaldarius (strain ATCC 33909 / DSM 639 / JCM 8929 / NBRC 15157 / NCIMB 11770).